Here is a 175-residue protein sequence, read N- to C-terminus: Co-chaperone protein daf-41 (175 aa).

The CS domain maps to 2–89 (AKQPTVLWAQ…KTPAWWPRLL (88 aa)). Residues 109 to 175 (DEDDEAEDAG…EEEGKNGTRA (67 aa)) are disordered. Residues 148-168 (GLEDDEEDDDMPDLEDNEEEE) show a composition bias toward acidic residues.

This sequence belongs to the p23/wos2 family. As to expression, expressed in anterior and posterior neurons including ASE, AWC, ASI and ADL amphids and phasmid sensory neurons, peripheral neurons and ventral cord motorneurons. Additionally expressed in body wall muscle, pharynx, vulva, germ cells and intestine.

Co-chaperone for hsp90/daf-21. Involved in regulation of longevity, larval entry and exit from the dauer stage of development and response to environmental cues, such as oxidative stress, in a temperature-dependent manner. Role in daf-16 and hsf-1 inhibition at elevated temperatures. The polypeptide is Co-chaperone protein daf-41 (Caenorhabditis elegans).